Reading from the N-terminus, the 347-residue chain is Quinolinate synthase (347 aa).

Iminosuccinate is bound by residues His-47 and Ser-68. [4Fe-4S] cluster is bound at residue Cys-113. Residues 139 to 141 (YAN) and Ser-156 each bind iminosuccinate. A [4Fe-4S] cluster-binding site is contributed by Cys-200. Residues 226 to 228 (HPE) and Thr-243 contribute to the iminosuccinate site. Cys-297 contributes to the [4Fe-4S] cluster binding site.

The protein belongs to the quinolinate synthase family. Type 1 subfamily. Requires [4Fe-4S] cluster as cofactor.

It is found in the cytoplasm. It carries out the reaction iminosuccinate + dihydroxyacetone phosphate = quinolinate + phosphate + 2 H2O + H(+). The protein operates within cofactor biosynthesis; NAD(+) biosynthesis; quinolinate from iminoaspartate: step 1/1. In terms of biological role, catalyzes the condensation of iminoaspartate with dihydroxyacetone phosphate to form quinolinate. This Escherichia coli (strain K12 / MC4100 / BW2952) protein is Quinolinate synthase.